The chain runs to 1562 residues: Phospholipid-transporting ATPase dnf1 (1562 aa).

4 disordered regions span residues 1 to 38 (MKSSGIAGDSNGFETNFLNETTNREEDGAFNWNAADDG), 55 to 94 (LPLGIDENELDEIDINGDSKKLDSVEVDESHDVNSPSDSR), 115 to 134 (TPSTKTEQTSKGKGKKKKAH), and 146 to 166 (PLDDIEPTSPREASPVFNGRP). Over 1–275 (MKSSGIAGDS…IAIMQMIPGW (275 aa)) the chain is Extracellular. The span at 12 to 21 (GFETNFLNET) shows a compositional bias: polar residues. Acidic residues predominate over residues 60–69 (DENELDEIDI). A compositionally biased stretch (basic and acidic residues) spans 71 to 86 (GDSKKLDSVEVDESHD). Residues 276 to 296 (STTGTYTTIIPLLIFISIAIL) form a helical membrane-spanning segment. The Cytoplasmic segment spans residues 297–574 (REGFDNYRRY…APSMQKVTNR (278 aa)). The disordered stretch occupies residues 347 to 406 (SQESASRSTIRSTDEREPERTSEDPPQLPPSPSSPSSPALSVKPNIDPQPPLYNSTLTTT). Residues 358-369 (STDEREPERTSE) are compositionally biased toward basic and acidic residues. The span at 372–381 (PQLPPSPSSP) shows a compositional bias: pro residues. Residues 575–595 (IVIFIFALVVSMAIYCTAAYF) form a helical membrane-spanning segment. The Extracellular segment spans residues 596-614 (VWQKKVERKLWYLTNSKLS). A helical membrane pass occupies residues 615–635 (FVPILVSFIILYNTMVPISLY). The Cytoplasmic portion of the chain corresponds to 636 to 1309 (VSMEIIRVFQ…YILGTFYKEQ (674 aa)). Catalysis depends on aspartate 684, which acts as the 4-aspartylphosphate intermediate. Aspartate 684, lysine 685, threonine 686, glutamate 794, phenylalanine 843, serine 845, lysine 848, and lysine 866 together coordinate ATP. Aspartate 684 contributes to the Mg(2+) binding site. Residue threonine 686 coordinates Mg(2+). Serine 954 carries the phosphoserine modification. ATP is bound by residues arginine 1022, threonine 1023, threonine 1102, glycine 1103, aspartate 1104, 1181 to 1188 (VIVIDGST), arginine 1216, and lysine 1222. Residue aspartate 1243 participates in Mg(2+) binding. Asparagine 1246 and aspartate 1247 together coordinate ATP. A helical membrane pass occupies residues 1310 to 1330 (FFFLMQAIMQPFVGYTGQSLY). The Extracellular portion of the chain corresponds to 1331 to 1332 (ES). Residues 1333 to 1353 (WGLTCFNTLFSSLCVIGLGIF) form a helical membrane-spanning segment. The Cytoplasmic portion of the chain corresponds to 1354-1381 (EKDLSASTVIAVPELYQKGINNEAFNWR). A helical transmembrane segment spans residues 1382–1402 (VYFGWCSIAFIQAFLVFYVTY). The Extracellular portion of the chain corresponds to 1403–1414 (SLFGMKELNDNN). The chain crosses the membrane as a helical span at residues 1415-1435 (IFAYGQLIFTAAIFIMNFKLV). The Cytoplasmic portion of the chain corresponds to 1436 to 1443 (FIEMQYIN). A helical transmembrane segment spans residues 1444-1464 (IISIIVLVLTSLAWFLFNIFI). At 1465 to 1490 (SEHYPDKNLYLARSQFLHHFGKNPSW) the chain is on the extracellular side. Residues 1491–1511 (WLTMLFVMVCALTIDIVAQML) form a helical membrane-spanning segment. The Cytoplasmic segment spans residues 1512–1562 (RRTLRPTDTDIFVEMENDAFVRSRFEQESGEFLQANAPSVDEIEQYLKSRD).

Belongs to the cation transport ATPase (P-type) (TC 3.A.3) family. Type IV subfamily. Requires Mg(2+) as cofactor.

It is found in the golgi apparatus. The protein resides in the trans-Golgi network membrane. Its subcellular location is the endosome membrane. It catalyses the reaction ATP + H2O + phospholipidSide 1 = ADP + phosphate + phospholipidSide 2.. The catalysed reaction is a 1,2-diacyl-sn-glycero-3-phosphocholine(out) + ATP + H2O = a 1,2-diacyl-sn-glycero-3-phosphocholine(in) + ADP + phosphate + H(+). The enzyme catalyses a 1,2-diacyl-sn-glycero-3-phosphoethanolamine(out) + ATP + H2O = a 1,2-diacyl-sn-glycero-3-phosphoethanolamine(in) + ADP + phosphate + H(+). Its function is as follows. Catalytic component of a P4-ATPase flippase complex which catalyzes the hydrolysis of ATP coupled to the transport of phosphatidylcholine and small amounts of phosphatidylethanolamine from the lumen to the cytosolic leaflet of the trans-Golgi network and ensures the maintenance of asymmetric distribution of phospholipids. May be involved in transport from early endosomes to the trans-Golgi network (TGN). This Schizosaccharomyces pombe (strain 972 / ATCC 24843) (Fission yeast) protein is Phospholipid-transporting ATPase dnf1.